Consider the following 470-residue polypeptide: ATP synthase subunit beta (470 aa).

ATP is bound at residue 155–162 (GGAGVGKT).

It belongs to the ATPase alpha/beta chains family. F-type ATPases have 2 components, CF(1) - the catalytic core - and CF(0) - the membrane proton channel. CF(1) has five subunits: alpha(3), beta(3), gamma(1), delta(1), epsilon(1). CF(0) has three main subunits: a(1), b(2) and c(9-12). The alpha and beta chains form an alternating ring which encloses part of the gamma chain. CF(1) is attached to CF(0) by a central stalk formed by the gamma and epsilon chains, while a peripheral stalk is formed by the delta and b chains.

The protein resides in the cell membrane. The catalysed reaction is ATP + H2O + 4 H(+)(in) = ADP + phosphate + 5 H(+)(out). Produces ATP from ADP in the presence of a proton gradient across the membrane. The catalytic sites are hosted primarily by the beta subunits. In Staphylococcus saprophyticus subsp. saprophyticus (strain ATCC 15305 / DSM 20229 / NCIMB 8711 / NCTC 7292 / S-41), this protein is ATP synthase subunit beta.